We begin with the raw amino-acid sequence, 381 residues long: Cytochrome b (381 aa).

Helical transmembrane passes span 34-54 (FGSL…FLAM), 78-99 (WLIR…YLHI), 114-134 (WNIG…GYVL), and 179-199 (FFAF…IHLL). His-84 and His-98 together coordinate heme b. 2 residues coordinate heme b: His-183 and His-197. An a ubiquinone-binding site is contributed by His-202. Helical transmembrane passes span 227–247 (YKDL…ALFM), 289–309 (LGGV…PLLH), 321–341 (LTQI…WIGG), and 348–368 (FITV…IIMP).

Belongs to the cytochrome b family. The cytochrome bc1 complex contains 3 respiratory subunits (MT-CYB, CYC1 and UQCRFS1), 2 core proteins (UQCRC1 and UQCRC2) and probably 6 low-molecular weight proteins. It depends on heme b as a cofactor.

It is found in the mitochondrion inner membrane. Its function is as follows. Component of the ubiquinol-cytochrome c reductase complex (complex III or cytochrome b-c1 complex) that is part of the mitochondrial respiratory chain. The b-c1 complex mediates electron transfer from ubiquinol to cytochrome c. Contributes to the generation of a proton gradient across the mitochondrial membrane that is then used for ATP synthesis. This chain is Cytochrome b (mt-cyb), found in Sphyrna tiburo vespertina (Pacific bonnethead shark).